Reading from the N-terminus, the 155-residue chain is Isotocin-neurophysin IT 1 (155 aa).

The first 19 residues, 1-19, serve as a signal peptide directing secretion; it reads MTGTAISVCLLFLLSVCSA. Cys-20 and Cys-25 are disulfide-bonded. A Glycine amide modification is found at Gly-28. 7 disulfide bridges follow: Cys-41–Cys-85, Cys-44–Cys-58, Cys-52–Cys-75, Cys-59–Cys-65, Cys-92–Cys-105, Cys-99–Cys-117, and Cys-106–Cys-111.

It belongs to the vasopressin/oxytocin family. Seven disulfide bonds are present in neurophysin.

Its function is as follows. Isotocin causes contraction of smooth muscles. This Takifugu rubripes (Japanese pufferfish) protein is Isotocin-neurophysin IT 1.